Here is a 75-residue protein sequence, read N- to C-terminus: Small integral membrane protein 15 (75 aa).

The helical transmembrane segment at Y21 to L41 threads the bilayer. A coiled-coil region spans residues I49–D75. Residues K52–A67 show a composition bias toward basic and acidic residues. The segment at K52–D75 is disordered.

It belongs to the SMIM15 family.

The protein resides in the membrane. The protein is Small integral membrane protein 15 (smim15) of Xenopus laevis (African clawed frog).